The sequence spans 324 residues: Zinc metalloproteinase leucurolysin-B (324 aa).

A Peptidase M12B domain is found at 1–119; the sequence is DTVLLNRISH…LNPQCILNEP (119 aa). D11 contributes to the Ca(2+) binding site. Cystine bridges form between C34/C114, C74/C98, and C76/C81. A Zn(2+)-binding site is contributed by H59. Residue E60 is part of the active site. Zn(2+)-binding residues include H63 and H69. N-linked (GlcNAc...) asparagine glycosylation is present at N97. Residues C114, N117, V129, N132, L134, E136, E139, and D142 each contribute to the Ca(2+) site. Positions 127-213 constitute a Disintegrin domain; it reads PPVCGNELLE…QCPTDDFKRN (87 aa). Cystine bridges form between C130–C159, C141–C154, C143–C149, C153–C176, C167–C173, C172–C198, C185–C205, C192–C224, C217–C229, C236–C286, C251–C295, C264–C274, and C281–C315. The D/ECD-tripeptide motif lies at 191-193; it reads ECD. N-linked (GlcNAc...) asparagine glycans are attached at residues N296 and N305.

This sequence belongs to the venom metalloproteinase (M12B) family. P-III subfamily. P-IIIa sub-subfamily. In terms of assembly, monomer. The cofactor is Zn(2+). In terms of processing, N-glycosylated. Post-translationally, the N-terminus is blocked. As to expression, expressed by the venom gland.

The protein resides in the secreted. Inhibited by EDTA, but not by PMSF. Pre-incubation with 2 mM DTT completely abolishes activity. In terms of biological role, snake venom zinc metalloproteinase that acts as a potent hemorrhagic toxin. Hydrolyzes the insulin B chain at the 14-Ala-|-Leu-15 bond but not the 16-Tyr-|-Leu-17 bond. Degrades the alpha-chain of fibrin and hydrolyzes the Aalpha-chain of fibrinogen (FGA) while leaving the beta and gamma chains unaffected. Degrades type-I collagen and its gelatin. Degrades the alpha-1 chain of type-IV collagen and its gelatin but not the alpha-2 chain. Degrades plasma fibronectin, plasma vitronectin and basement membrane enactin. It inhibits collagen-induced platelet aggregation. The sequence is that of Zinc metalloproteinase leucurolysin-B from Bothrops leucurus (Whitetail lancehead).